Here is a 177-residue protein sequence, read N- to C-terminus: Large ribosomal subunit protein uL6 (177 aa).

The interval 151 to 177 is disordered; that stretch reads LRPPEPYKGKGVRYAGENVRRKEGKKK.

Belongs to the universal ribosomal protein uL6 family. As to quaternary structure, part of the 50S ribosomal subunit.

This protein binds to the 23S rRNA, and is important in its secondary structure. It is located near the subunit interface in the base of the L7/L12 stalk, and near the tRNA binding site of the peptidyltransferase center. This is Large ribosomal subunit protein uL6 from Phenylobacterium zucineum (strain HLK1).